Here is a 570-residue protein sequence, read N- to C-terminus: MNRIISINGPLVIAKGKFSIFEVVRVGEEKLIGEVIGIENDKAYIQVYEDTNGLKVGEPVFNTGKPLTIELGPGLLANIFDGLGRPLKDIYEKTQSIYIPKGIDLPTLDRKKVWEFIPKKKKGDTIKGGDIIGTVNENGFEHRIIVPPNVEGKIEEIYEGNFTIEETIAIVNGKPIKLYHEWPIRKPRPYKEKLDYNYPFITGTRVLDIMFPIAKGGSAAVPGPFGSGKTVLNQQIAKWADSDIVIYIGCGERGNEMTEVLEEFPKLKDPKTGKPLMYRTILIANTSNMPIAAREASIYLGATIGEYFRDQGYSVVVNADSTSRWAEALREISSRLGEIPSEEGYPAYLLRKLAEFYERSGRVRTLNDLEGSLTIIGAVSPPGGDFSEPVTQNTLRLVGALWALDSKLAYKRHYPAINYLISYTKQWEFVKKYFEELYEDVIEIREEFFAILKRESELMDIVSIVGPDALSDNEKIYLHMGRIIREGFLQQDAFDENDSYSPLEKTIELMRIIHKYYVTVKQLLGKIPLEEIEQKGIHEKIIKLRYKSLKEFREEIKAIEQEILSLLNSQ.

ATP is bound at residue 223-230 (GPFGSGKT).

Belongs to the ATPase alpha/beta chains family. In terms of assembly, has multiple subunits with at least A(3), B(3), C, D, E, F, H, I and proteolipid K(x).

The protein localises to the cell membrane. The enzyme catalyses ATP + H2O + 4 H(+)(in) = ADP + phosphate + 5 H(+)(out). Functionally, component of the A-type ATP synthase that produces ATP from ADP in the presence of a proton gradient across the membrane. The A chain is the catalytic subunit. The protein is A-type ATP synthase subunit A of Nanoarchaeum equitans (strain Kin4-M).